The chain runs to 485 residues: Sulfate adenylyltransferase subunit 1 (485 aa).

The tr-type G domain maps to 17 to 232 (KDLLRLLTAG…LETVHIDNDH (216 aa)). Residues 26–33 (GSVDDGKS) are G1. 26 to 33 (GSVDDGKS) is a binding site for GTP. The segment at 84 to 88 (GITID) is G2. The segment at 105-108 (DTPG) is G3. GTP contacts are provided by residues 105-109 (DTPGH) and 160-163 (NKMD). Residues 160–163 (NKMD) are G4. The interval 197–199 (SAL) is G5.

This sequence belongs to the TRAFAC class translation factor GTPase superfamily. Classic translation factor GTPase family. CysN/NodQ subfamily. As to quaternary structure, heterodimer composed of CysD, the smaller subunit, and CysN.

It catalyses the reaction sulfate + ATP + H(+) = adenosine 5'-phosphosulfate + diphosphate. It participates in sulfur metabolism; hydrogen sulfide biosynthesis; sulfite from sulfate: step 1/3. With CysD forms the ATP sulfurylase (ATPS) that catalyzes the adenylation of sulfate producing adenosine 5'-phosphosulfate (APS) and diphosphate, the first enzymatic step in sulfur assimilation pathway. APS synthesis involves the formation of a high-energy phosphoric-sulfuric acid anhydride bond driven by GTP hydrolysis by CysN coupled to ATP hydrolysis by CysD. In Bacteroides thetaiotaomicron (strain ATCC 29148 / DSM 2079 / JCM 5827 / CCUG 10774 / NCTC 10582 / VPI-5482 / E50), this protein is Sulfate adenylyltransferase subunit 1.